The chain runs to 886 residues: CRM-domain containing factor CFM3, chloroplastic/mitochondrial (886 aa).

Residues 1–70 (MAAAAMAISP…LDLRPEPSPS (70 aa)) constitute a chloroplast and mitochondrion transit peptide. Disordered regions lie at residues 56–84 (RPASALDLRPEPSPSSDSDDDAAFGTSRS) and 269–291 (TKGTSKNTQTLGMKSSIKEPPGH). 3 consecutive CRM domains span residues 174-270 (LTLP…EPTK), 378-475 (PSLS…ELAE), and 590-690 (ETIT…SKLR). The segment covering 270–281 (KGTSKNTQTLGM) has biased composition (polar residues). Residues 771–886 (SFDNSVAVQN…QSTELTNTCS (116 aa)) are disordered. The span at 793–827 (NSDDEGDYSDEDDDEDDDNDEEDGFDYENDDEDDV) shows a compositional bias: acidic residues. 2 stretches are compositionally biased toward polar residues: residues 841-852 (DFGSSDSENYVS) and 869-886 (DSRNSYSEQSTELTNTCS).

Interacts with RNA. Part of large ribonucleo-protein particles that contain CAF1 and/or CAF2, and RNC1.

It localises to the plastid. The protein localises to the chloroplast. It is found in the mitochondrion. Functionally, binds specific group II introns in chloroplasts and facilitates their splicing. Acts on subgroup IIB introns. The substrates of the subgroup IIB also require the CRM domain proteins CAF1 or CAF2, with a simultaneous binding of CFM3 and CAF1 or CAF2. May influence the biogenesis of the mitochondrial small ribosomal subunit. The sequence is that of CRM-domain containing factor CFM3, chloroplastic/mitochondrial from Oryza sativa subsp. japonica (Rice).